We begin with the raw amino-acid sequence, 441 residues long: ATP-dependent protease ATPase subunit HslU (441 aa).

Residues isoleucine 18, 60-65, aspartate 254, glutamate 319, and arginine 391 contribute to the ATP site; that span reads GVGKTE.

The protein belongs to the ClpX chaperone family. HslU subfamily. As to quaternary structure, a double ring-shaped homohexamer of HslV is capped on each side by a ring-shaped HslU homohexamer. The assembly of the HslU/HslV complex is dependent on binding of ATP.

It is found in the cytoplasm. Its function is as follows. ATPase subunit of a proteasome-like degradation complex; this subunit has chaperone activity. The binding of ATP and its subsequent hydrolysis by HslU are essential for unfolding of protein substrates subsequently hydrolyzed by HslV. HslU recognizes the N-terminal part of its protein substrates and unfolds these before they are guided to HslV for hydrolysis. The polypeptide is ATP-dependent protease ATPase subunit HslU (Shewanella denitrificans (strain OS217 / ATCC BAA-1090 / DSM 15013)).